The sequence spans 427 residues: Glutamate-1-semialdehyde 2,1-aminomutase (427 aa).

N6-(pyridoxal phosphate)lysine is present on Lys268.

It belongs to the class-III pyridoxal-phosphate-dependent aminotransferase family. HemL subfamily. It depends on pyridoxal 5'-phosphate as a cofactor.

It is found in the cytoplasm. The catalysed reaction is (S)-4-amino-5-oxopentanoate = 5-aminolevulinate. It functions in the pathway porphyrin-containing compound metabolism; protoporphyrin-IX biosynthesis; 5-aminolevulinate from L-glutamyl-tRNA(Glu): step 2/2. This chain is Glutamate-1-semialdehyde 2,1-aminomutase, found in Methanococcus maripaludis (strain C7 / ATCC BAA-1331).